Here is a 315-residue protein sequence, read N- to C-terminus: Diacylglycerol kinase (315 aa).

The 132-residue stretch at 1 to 132 (MRKRARIIYN…VDIGKMNNRY (132 aa)) folds into the DAGKc domain. Residues 10 to 14 (NPTSG), threonine 41, 67 to 73 (GDGTLNE), and threonine 94 each bind ATP. Mg(2+) is bound by residues lysine 213, aspartate 216, and tyrosine 218. Glutamate 273 acts as the Proton acceptor in catalysis.

It belongs to the diacylglycerol/lipid kinase family. As to quaternary structure, homodimer. Mg(2+) is required as a cofactor.

It carries out the reaction a 1,2-diacyl-sn-glycerol + ATP = a 1,2-diacyl-sn-glycero-3-phosphate + ADP + H(+). Its function is as follows. Catalyzes the phosphorylation of diacylglycerol (DAG) into phosphatidic acid. Is a key enzyme involved in the production of lipoteichoic acid by reintroducing DAG formed from the breakdown of membrane phospholipids into the phosphatidylglycerol biosynthetic pathway. The polypeptide is Diacylglycerol kinase (dagK) (Staphylococcus aureus (strain USA300 / TCH1516)).